The chain runs to 425 residues: Serine--tRNA ligase (425 aa).

232–234 (TSE) contributes to the L-serine binding site. Residues 263–265 (RRE) and Val-279 contribute to the ATP site. Glu-286 contributes to the L-serine binding site. 350–353 (EVVS) lines the ATP pocket. Thr-387 is an L-serine binding site.

The protein belongs to the class-II aminoacyl-tRNA synthetase family. Type-1 seryl-tRNA synthetase subfamily. As to quaternary structure, homodimer. The tRNA molecule binds across the dimer.

The protein resides in the cytoplasm. The catalysed reaction is tRNA(Ser) + L-serine + ATP = L-seryl-tRNA(Ser) + AMP + diphosphate + H(+). It carries out the reaction tRNA(Sec) + L-serine + ATP = L-seryl-tRNA(Sec) + AMP + diphosphate + H(+). It participates in aminoacyl-tRNA biosynthesis; selenocysteinyl-tRNA(Sec) biosynthesis; L-seryl-tRNA(Sec) from L-serine and tRNA(Sec): step 1/1. Catalyzes the attachment of serine to tRNA(Ser). Is also able to aminoacylate tRNA(Sec) with serine, to form the misacylated tRNA L-seryl-tRNA(Sec), which will be further converted into selenocysteinyl-tRNA(Sec). The sequence is that of Serine--tRNA ligase from Methanocella arvoryzae (strain DSM 22066 / NBRC 105507 / MRE50).